We begin with the raw amino-acid sequence, 152 residues long: Small ribosomal subunit protein uS13 (152 aa).

Belongs to the universal ribosomal protein uS13 family.

The protein localises to the cytoplasm. Functionally, located at the top of the head of the 40S subunit, it contacts several helices of the 18S rRNA. This is Small ribosomal subunit protein uS13 (RPS18) from Argopecten irradians (Bay scallop).